A 389-amino-acid polypeptide reads, in one-letter code: Probable peptide chain release factor 1, mitochondrial (389 aa).

Residue Q259 is modified to N5-methylglutamine.

Belongs to the prokaryotic/mitochondrial release factor family. Methylation of glutamine in the GGQ triplet is conserved from bacteria to mammals.

Its subcellular location is the mitochondrion. Functionally, mitochondrial peptide chain release factor that directs the termination of translation in response to the peptide chain termination codons UAA and UAG. The chain is Probable peptide chain release factor 1, mitochondrial from Caenorhabditis elegans.